A 35-amino-acid polypeptide reads, in one-letter code: Photosystem II reaction center protein Psb30 (35 aa).

Residues 6–26 form a helical membrane-spanning segment; sequence VIVQLVFLALIITTGPVIIVY.

The protein belongs to the Psb30/Ycf12 family. As to quaternary structure, PSII is composed of 1 copy each of membrane proteins PsbA, PsbB, PsbC, PsbD, PsbE, PsbF, PsbH, PsbI, PsbJ, PsbK, PsbL, PsbM, PsbT, PsbY, PsbZ, Psb30/Ycf12, peripheral proteins of the oxygen-evolving complex and a large number of cofactors. It forms dimeric complexes.

It is found in the plastid. The protein resides in the chloroplast thylakoid membrane. A core subunit of photosystem II (PSII), probably helps stabilize the reaction center. This is Photosystem II reaction center protein Psb30 from Cyanidium caldarium (Red alga).